Here is a 949-residue protein sequence, read N- to C-terminus: Leucine--tRNA ligase (949 aa).

The short motif at 68-79 (PYPSGEGLHVGH) is the 'HIGH' region element. The interval 540 to 562 (VPDYSPVSFDPDDAGSEPSPPLG) is disordered. Positions 722-726 (KIGKS) match the 'KMSKS' region motif. Lys725 contacts ATP.

This sequence belongs to the class-I aminoacyl-tRNA synthetase family.

The protein localises to the cytoplasm. It catalyses the reaction tRNA(Leu) + L-leucine + ATP = L-leucyl-tRNA(Leu) + AMP + diphosphate. The chain is Leucine--tRNA ligase from Mycolicibacterium gilvum (strain PYR-GCK) (Mycobacterium gilvum (strain PYR-GCK)).